Here is a 904-residue protein sequence, read N- to C-terminus: DNA mismatch repair protein MutS (904 aa).

Residue 638-645 (GPNMAGKS) coordinates ATP. Positions 825 to 869 (KSKADGTRRPASYHEAQPLLPGMPEPPSTASAEPPQTVTPPEPPV) are disordered.

Belongs to the DNA mismatch repair MutS family.

In terms of biological role, this protein is involved in the repair of mismatches in DNA. It is possible that it carries out the mismatch recognition step. This protein has a weak ATPase activity. The chain is DNA mismatch repair protein MutS from Oleidesulfovibrio alaskensis (strain ATCC BAA-1058 / DSM 17464 / G20) (Desulfovibrio alaskensis).